The following is a 61-amino-acid chain: Large ribosomal subunit protein bL28 (61 aa).

It belongs to the bacterial ribosomal protein bL28 family.

The chain is Large ribosomal subunit protein bL28 from Geobacillus sp. (strain WCH70).